Consider the following 140-residue polypeptide: Nucleoside diphosphate kinase (140 aa).

ATP contacts are provided by Lys11, Phe59, Arg87, Thr93, Arg104, and Asn114. The active-site Pros-phosphohistidine intermediate is the His117.

It belongs to the NDK family. Homotetramer. Mg(2+) serves as cofactor.

The protein localises to the cytoplasm. The enzyme catalyses a 2'-deoxyribonucleoside 5'-diphosphate + ATP = a 2'-deoxyribonucleoside 5'-triphosphate + ADP. It catalyses the reaction a ribonucleoside 5'-diphosphate + ATP = a ribonucleoside 5'-triphosphate + ADP. Functionally, major role in the synthesis of nucleoside triphosphates other than ATP. The ATP gamma phosphate is transferred to the NDP beta phosphate via a ping-pong mechanism, using a phosphorylated active-site intermediate. The polypeptide is Nucleoside diphosphate kinase (Sinorhizobium medicae (strain WSM419) (Ensifer medicae)).